Here is a 316-residue protein sequence, read N- to C-terminus: MIKAVQSPPTPYLQFSRKQWAALRNSVPLTLTEAEIVNLKGINEDLSLEEVAEIYLPLSRLLNFYISSNLRRQAVLEQFLGTDGQRIPYIIGIAGSVAVGKSTTARVLQALLSRWPEHRTVELVTTDGFLHPNSVLKQRDLMKKKGFPESYDIRSLVNFVSKVKSGTPRVTAPVYSHLIYDVVPDEQKVISQPDILILEGLNVLQSGSDYNHDPHHVFVSDFVDFSIYVDAPETLLQSWYINRFLKFRQGAFSDPDSYFHHYSQLSEQEAVAIASQLWSEINGRNLQQNILPTRERASLILGKSANHAVERVRLRK.

95–102 (GSVAVGKS) is an ATP binding site.

It belongs to the prokaryotic pantothenate kinase family.

The protein resides in the cytoplasm. It catalyses the reaction (R)-pantothenate + ATP = (R)-4'-phosphopantothenate + ADP + H(+). It functions in the pathway cofactor biosynthesis; coenzyme A biosynthesis; CoA from (R)-pantothenate: step 1/5. This is Pantothenate kinase from Sodalis glossinidius (strain morsitans).